Here is a 461-residue protein sequence, read N- to C-terminus: Phosphoglucosamine mutase (461 aa).

The Phosphoserine intermediate role is filled by S118. Residues S118, D255, D257, and D259 each coordinate Mg(2+). A Phosphoserine modification is found at S118.

It belongs to the phosphohexose mutase family. Mg(2+) serves as cofactor. In terms of processing, activated by phosphorylation.

The enzyme catalyses alpha-D-glucosamine 1-phosphate = D-glucosamine 6-phosphate. Catalyzes the conversion of glucosamine-6-phosphate to glucosamine-1-phosphate. This Acidothermus cellulolyticus (strain ATCC 43068 / DSM 8971 / 11B) protein is Phosphoglucosamine mutase.